A 635-amino-acid chain; its full sequence is UvrABC system protein C (635 aa).

The segment covering 1–14 (MAQNHMSETMNDIS) has biased composition (polar residues). Residues 1-27 (MAQNHMSETMNDISAESPDQPEPPRTG) are disordered. Residues 40 to 117 (SSPGVYRMLD…IKQLKPKYNV (78 aa)) enclose the GIY-YIG domain. A UVR domain is found at 227 to 262 (TKIQEELGAEMQAASEAMEYERAAALRDRIKALTQV).

Belongs to the UvrC family. As to quaternary structure, interacts with UvrB in an incision complex.

The protein localises to the cytoplasm. Functionally, the UvrABC repair system catalyzes the recognition and processing of DNA lesions. UvrC both incises the 5' and 3' sides of the lesion. The N-terminal half is responsible for the 3' incision and the C-terminal half is responsible for the 5' incision. The protein is UvrABC system protein C of Ruegeria sp. (strain TM1040) (Silicibacter sp.).